The chain runs to 350 residues: Bifunctional nitrilase/nitrile hydratase NIT4B (350 aa).

The 273-residue stretch at 30–302 folds into the CN hydrolase domain; sequence VRATVVQAST…EALISADLDL (273 aa). Glu70 functions as the Proton acceptor in the catalytic mechanism. Lys157 is a catalytic residue. Residue Cys191 is the Nucleophile of the active site.

Belongs to the carbon-nitrogen hydrolase superfamily. Nitrilase family. In terms of tissue distribution, highly expressed in leaves and cotyledons, lower expression in stems and roots.

It catalyses the reaction L-asparagine = 3-cyano-L-alanine + H2O. It carries out the reaction 3-cyano-L-alanine + 2 H2O = L-aspartate + NH4(+). Involved in the cyanide detoxification pathway. Has nitrilase and nitrile-hydratase activity in the ratio 3.3:1, producing both asparagine and aspartic acid from beta-cyano-L-alanine (Ala(CN)). Can also use 3-phenylpropionitrile as substrate, but not indole-3-acetonitrile. The polypeptide is Bifunctional nitrilase/nitrile hydratase NIT4B (NIT4B) (Lupinus angustifolius (Narrow-leaved blue lupine)).